We begin with the raw amino-acid sequence, 256 residues long: Cell division protein DivIB (256 aa).

Residues 1-23 (MSKDLISTDEYIKIKKKRKRIKK) are Cytoplasmic-facing. Residues 24–44 (IVVLFIFLISILVTLCLKIPY) traverse the membrane as a helical segment. In terms of domain architecture, POTRA spans 45-113 (FNIESIEIKG…NKLEIYVKER (69 aa)). The Extracellular portion of the chain corresponds to 45–256 (FNIESIEIKG…EGNPVFYIEK (212 aa)).

This sequence belongs to the FtsQ/DivIB family. DivIB subfamily.

It is found in the cell membrane. In terms of biological role, cell division protein that may be involved in stabilizing or promoting the assembly of the division complex. In Clostridium botulinum (strain Loch Maree / Type A3), this protein is Cell division protein DivIB.